Here is a 281-residue protein sequence, read N- to C-terminus: MTHQTHAYHMVNPSPWPLTGALSALLLTSGLIMWFHYNSSTLMFMGLTTMLLTMYQWWRDIIREGTFQGHHTPVVQKGLRYGMILFILSEVFFFIGFFWAFYHSSLAPTPELGGCWPPTGIHPLNPLEVPLLNTSILLASGVSITWAHHSLMEGNRKQMIQALLITISLGLYFTILQAMEYYEASFTISDGVYGSTFFVATGFHGLHVIIGSTFLIVCLLRQLFYHFTSTHHFGFEAAAWYWHFVDVVWLFLYVSIYWWGSYFSSMISTTDFQSLSSGSNQ.

Residues 1-15 (MTHQTHAYHMVNPSP) lie on the Mitochondrial matrix side of the membrane. Residues 16–34 (WPLTGALSALLLTSGLIMW) traverse the membrane as a helical segment. Over 35–40 (FHYNSS) the chain is Mitochondrial intermembrane. Residues 41–66 (TLMFMGLTTMLLTMYQWWRDIIREGT) traverse the membrane as a helical segment. Topologically, residues 67–72 (FQGHHT) are mitochondrial matrix. A helical transmembrane segment spans residues 73–105 (PVVQKGLRYGMILFILSEVFFFIGFFWAFYHSS). Residues 106–128 (LAPTPELGGCWPPTGIHPLNPLE) are Mitochondrial intermembrane-facing. A helical transmembrane segment spans residues 129–152 (VPLLNTSILLASGVSITWAHHSLM). The Mitochondrial matrix portion of the chain corresponds to 153 to 155 (EGN). The helical transmembrane segment at 156-183 (RKQMIQALLITISLGLYFTILQAMEYYE) threads the bilayer. Over 184–190 (ASFTISD) the chain is Mitochondrial intermembrane. Residues 191–223 (GVYGSTFFVATGFHGLHVIIGSTFLIVCLLRQL) traverse the membrane as a helical segment. At 224-232 (FYHFTSTHH) the chain is on the mitochondrial matrix side. Residues 233–256 (FGFEAAAWYWHFVDVVWLFLYVSI) form a helical membrane-spanning segment. Topologically, residues 257–281 (YWWGSYFSSMISTTDFQSLSSGSNQ) are mitochondrial intermembrane.

Belongs to the cytochrome c oxidase subunit 3 family. Component of the cytochrome c oxidase (complex IV, CIV), a multisubunit enzyme composed of 14 subunits. The complex is composed of a catalytic core of 3 subunits MT-CO1, MT-CO2 and MT-CO3, encoded in the mitochondrial DNA, and 11 supernumerary subunits COX4I, COX5A, COX5B, COX6A, COX6B, COX6C, COX7A, COX7B, COX7C, COX8 and NDUFA4, which are encoded in the nuclear genome. The complex exists as a monomer or a dimer and forms supercomplexes (SCs) in the inner mitochondrial membrane with NADH-ubiquinone oxidoreductase (complex I, CI) and ubiquinol-cytochrome c oxidoreductase (cytochrome b-c1 complex, complex III, CIII), resulting in different assemblies (supercomplex SCI(1)III(2)IV(1) and megacomplex MCI(2)III(2)IV(2)).

The protein resides in the mitochondrion inner membrane. The enzyme catalyses 4 Fe(II)-[cytochrome c] + O2 + 8 H(+)(in) = 4 Fe(III)-[cytochrome c] + 2 H2O + 4 H(+)(out). Its function is as follows. Component of the cytochrome c oxidase, the last enzyme in the mitochondrial electron transport chain which drives oxidative phosphorylation. The respiratory chain contains 3 multisubunit complexes succinate dehydrogenase (complex II, CII), ubiquinol-cytochrome c oxidoreductase (cytochrome b-c1 complex, complex III, CIII) and cytochrome c oxidase (complex IV, CIV), that cooperate to transfer electrons derived from NADH and succinate to molecular oxygen, creating an electrochemical gradient over the inner membrane that drives transmembrane transport and the ATP synthase. Cytochrome c oxidase is the component of the respiratory chain that catalyzes the reduction of oxygen to water. Electrons originating from reduced cytochrome c in the intermembrane space (IMS) are transferred via the dinuclear copper A center (CU(A)) of subunit 2 and heme A of subunit 1 to the active site in subunit 1, a binuclear center (BNC) formed by heme A3 and copper B (CU(B)). The BNC reduces molecular oxygen to 2 water molecules using 4 electrons from cytochrome c in the IMS and 4 protons from the mitochondrial matrix. The polypeptide is Cytochrome c oxidase subunit 3 (MT-CO3) (Didelphis virginiana (North American opossum)).